The following is a 117-amino-acid chain: Inner kinetochore subunit MHF1 (117 aa).

The protein belongs to the TAF9 family. CENP-S/MHF1 subfamily. The MHF histone-fold complex is a heterotetramer of 2 MHF1-MHF2 heterodimers. Together with MPH1/FANCM, forms the FANCM-MHF complex. Component of the inner kinetochore constitutive centromere-associated network (CCAN).

Functionally, dsDNA-binding component of a FANCM-MHF complex involved in DNA damage repair and genome maintenance. FANCM-MHF promotes gene conversion at blocked replication forks, probably by reversal of the stalled fork. Component of the kinetochore, a multiprotein complex that assembles on centromeric DNA and attaches chromosomes to spindle microtubules, mediating chromosome segregation and sister chromatid segregation during meiosis and mitosis. Component of the inner kinetochore constitutive centromere-associated network (CCAN), which serves as a structural platform for outer kinetochore assembly. This is Inner kinetochore subunit MHF1 from Candida albicans (strain SC5314 / ATCC MYA-2876) (Yeast).